A 186-amino-acid polypeptide reads, in one-letter code: uncharacterized protein (186 aa).

Residues 1 to 21 form the signal peptide; the sequence is MIHVKYIILGFIMVSSLNLYA.

This is an uncharacterized protein from Rickettsia conorii (strain ATCC VR-613 / Malish 7).